We begin with the raw amino-acid sequence, 323 residues long: Ferrochelatase (323 aa).

Residues His-195 and Glu-276 each contribute to the Fe cation site.

It belongs to the ferrochelatase family.

The protein resides in the cytoplasm. The enzyme catalyses heme b + 2 H(+) = protoporphyrin IX + Fe(2+). The protein operates within porphyrin-containing compound metabolism; protoheme biosynthesis; protoheme from protoporphyrin-IX: step 1/1. Its function is as follows. Catalyzes the ferrous insertion into protoporphyrin IX. This chain is Ferrochelatase, found in Mannheimia succiniciproducens (strain KCTC 0769BP / MBEL55E).